Reading from the N-terminus, the 159-residue chain is Large ribosomal subunit protein uL30 (159 aa).

This sequence belongs to the universal ribosomal protein uL30 family. As to quaternary structure, part of the 50S ribosomal subunit.

In Ignicoccus hospitalis (strain KIN4/I / DSM 18386 / JCM 14125), this protein is Large ribosomal subunit protein uL30.